Reading from the N-terminus, the 324-residue chain is Putative ribose-phosphate pyrophosphokinase 2 (324 aa).

ATP contacts are provided by residues 43–45 (DGE) and 102–103 (RQ). Residue His-136 participates in Mg(2+) binding. D-ribose 5-phosphate contacts are provided by residues Asp-225 and 229 to 233 (NTGKT).

It belongs to the ribose-phosphate pyrophosphokinase family. Class I subfamily. In terms of assembly, homohexamer. Mg(2+) serves as cofactor.

It localises to the cytoplasm. It catalyses the reaction D-ribose 5-phosphate + ATP = 5-phospho-alpha-D-ribose 1-diphosphate + AMP + H(+). It participates in metabolic intermediate biosynthesis; 5-phospho-alpha-D-ribose 1-diphosphate biosynthesis; 5-phospho-alpha-D-ribose 1-diphosphate from D-ribose 5-phosphate (route I): step 1/1. Functionally, involved in the biosynthesis of the central metabolite phospho-alpha-D-ribosyl-1-pyrophosphate (PRPP) via the transfer of pyrophosphoryl group from ATP to 1-hydroxyl of ribose-5-phosphate (Rib-5-P). This Streptococcus agalactiae serotype III (strain NEM316) protein is Putative ribose-phosphate pyrophosphokinase 2.